A 497-amino-acid polypeptide reads, in one-letter code: tRNA-2-methylthio-N(6)-dimethylallyladenosine synthase (497 aa).

The tract at residues 1–50 is disordered; that stretch reads MTGTSNIPTHGKEHKDAPALLPLPAPNPHHTHAAHPGNPSHDRPPSRGKL. Positions 48–165 constitute an MTTase N-terminal domain; that stretch reads GKLFIKTHGC…LPDMIRARRE (118 aa). Residues cysteine 57, cysteine 94, cysteine 128, cysteine 202, cysteine 206, and cysteine 209 each contribute to the [4Fe-4S] cluster site. The region spanning 188–430 is the Radical SAM core domain; sequence RAEGPSAFVS…QKHINTYAAD (243 aa). The TRAM domain occupies 433 to 496; that stretch reads KRMIGTVQTV…SNSLRGRVHT (64 aa).

It belongs to the methylthiotransferase family. MiaB subfamily. In terms of assembly, monomer. [4Fe-4S] cluster is required as a cofactor.

It is found in the cytoplasm. It catalyses the reaction N(6)-dimethylallyladenosine(37) in tRNA + (sulfur carrier)-SH + AH2 + 2 S-adenosyl-L-methionine = 2-methylsulfanyl-N(6)-dimethylallyladenosine(37) in tRNA + (sulfur carrier)-H + 5'-deoxyadenosine + L-methionine + A + S-adenosyl-L-homocysteine + 2 H(+). Its function is as follows. Catalyzes the methylthiolation of N6-(dimethylallyl)adenosine (i(6)A), leading to the formation of 2-methylthio-N6-(dimethylallyl)adenosine (ms(2)i(6)A) at position 37 in tRNAs that read codons beginning with uridine. The polypeptide is tRNA-2-methylthio-N(6)-dimethylallyladenosine synthase (Xylella fastidiosa (strain 9a5c)).